The chain runs to 906 residues: Protein translocase subunit SecA (906 aa).

Residues glutamine 89, glycine 107 to threonine 111, and aspartate 502 contribute to the ATP site. Positions 890, 892, 901, and 902 each coordinate Zn(2+).

It belongs to the SecA family. Monomer and homodimer. Part of the essential Sec protein translocation apparatus which comprises SecA, SecYEG and auxiliary proteins SecDF-YajC and YidC. Requires Zn(2+) as cofactor.

The protein resides in the cell inner membrane. It is found in the cytoplasm. It carries out the reaction ATP + H2O + cellular proteinSide 1 = ADP + phosphate + cellular proteinSide 2.. Part of the Sec protein translocase complex. Interacts with the SecYEG preprotein conducting channel. Has a central role in coupling the hydrolysis of ATP to the transfer of proteins into and across the cell membrane, serving both as a receptor for the preprotein-SecB complex and as an ATP-driven molecular motor driving the stepwise translocation of polypeptide chains across the membrane. The sequence is that of Protein translocase subunit SecA from Brucella canis (strain ATCC 23365 / NCTC 10854 / RM-666).